A 212-amino-acid polypeptide reads, in one-letter code: Ribosomal RNA small subunit methyltransferase G (212 aa).

S-adenosyl-L-methionine is bound by residues G73, 127 to 128 (IE), and R143.

It belongs to the methyltransferase superfamily. RNA methyltransferase RsmG family.

The protein resides in the cytoplasm. The enzyme catalyses guanosine(527) in 16S rRNA + S-adenosyl-L-methionine = N(7)-methylguanosine(527) in 16S rRNA + S-adenosyl-L-homocysteine. Functionally, specifically methylates the N7 position of guanine in position 527 of 16S rRNA. The polypeptide is Ribosomal RNA small subunit methyltransferase G (Methylobacterium sp. (strain 4-46)).